Here is a 107-residue protein sequence, read N- to C-terminus: uncharacterized protein (107 aa).

The segment at 23–64 (SASSSSSTRIPSGFASATSSKSNSSTKSSPSPINSFNNKTNN) is disordered. Residues 37 to 57 (ASATSSKSNSSTKSSPSPINS) show a composition bias toward low complexity. A helical transmembrane segment spans residues 76 to 98 (LAFGIVEFMVFNGMISTITTTTF).

It is found in the membrane. This is an uncharacterized protein from Dictyostelium discoideum (Social amoeba).